The chain runs to 229 residues: Flagellar L-ring protein (229 aa).

Positions 1-23 are cleaved as a signal peptide; that stretch reads MNPLTRVALAVAAFAALVLALSA. Cysteine 24 is lipidated: N-palmitoyl cysteine. Cysteine 24 carries S-diacylglycerol cysteine lipidation.

It belongs to the FlgH family. As to quaternary structure, the basal body constitutes a major portion of the flagellar organelle and consists of four rings (L,P,S, and M) mounted on a central rod.

It localises to the cell outer membrane. The protein localises to the bacterial flagellum basal body. Functionally, assembles around the rod to form the L-ring and probably protects the motor/basal body from shearing forces during rotation. The protein is Flagellar L-ring protein of Anaeromyxobacter sp. (strain K).